The chain runs to 604 residues: Integrin alpha-IIb (604 aa).

An FG-GAP repeat occupies 1–61 (QVLDSPFPTG…ASVQLLVQDS (61 aa)). The Extracellular portion of the chain corresponds to 1 to 558 (QVLDSPFPTG…TQLLRALEER (558 aa)). 5 residues coordinate Ca(2+): Asp-22, Asp-24, Asn-26, Tyr-28, and Asp-30. Cystine bridges form between Cys-69–Cys-80 and Cys-86–Cys-141. N-linked (GlcNAc...) asparagine glycosylation occurs at Asn-166. 4 cysteine pairs are disulfide-bonded: Cys-198-Cys-204, Cys-270-Cys-283, Cys-422-Cys-486, and Cys-476-Cys-481. Residue Asn-276 is glycosylated (N-linked (GlcNAc...) asparagine). The N-linked (GlcNAc...) asparagine glycan is linked to Asn-527. A helical transmembrane segment spans residues 559–584 (AIPIWWVLVGVLGGLLLLTILVLAMW). Residues 585-604 (KVGFFKRNRPPLEEDDEEGE) are Cytoplasmic-facing. The short motif at 587–591 (GFFKR) is the GFFKR motif element.

This sequence belongs to the integrin alpha chain family. In terms of assembly, heterodimer of an alpha and a beta subunit. The alpha subunit is composed of a heavy and a light chain linked by a disulfide bond. Alpha-IIb associates with beta-3. Directly interacts with RNF181. Interacts (via C-terminus cytoplasmic tail region) with CIB1; the interaction is direct and calcium-dependent. Interacts (via C-terminus cytoplasmic tail region) with CIB2, CIB3 and CIB4; the interactions are stabilized/increased in a calcium and magnesium-dependent manner. ITGA2B:ITGB3 interacts with PPIA/CYPA; the interaction is ROS and PPIase activity-dependent and is increased in the presence of thrombin. ITGA2B:ITGB3 interacts with SELP (via C-type lectin domain); the interaction mediates cell-cell interaction and adhesion.

It localises to the membrane. Integrin alpha-IIb/beta-3 is a receptor for fibronectin, fibrinogen, plasminogen, prothrombin, thrombospondin and vitronectin. It recognizes the sequence R-G-D in a wide array of ligands. It recognizes the sequence H-H-L-G-G-G-A-K-Q-A-G-D-V in fibrinogen gamma chain. Following activation integrin alpha-IIb/beta-3 brings about platelet/platelet interaction through binding of soluble fibrinogen. This step leads to rapid platelet aggregation which physically plugs ruptured endothelial cell surface. The chain is Integrin alpha-IIb (ITGA2B) from Papio cynocephalus (Yellow baboon).